The following is a 435-amino-acid chain: Serine--tRNA ligase (435 aa).

A disordered region spans residues 41 to 70; the sequence is QVKTEELQAQRNSRSKSIGQAKAKGDHEEA. The segment covering 49 to 58 has biased composition (polar residues); the sequence is AQRNSRSKSI. 242 to 244 contacts L-serine; that stretch reads TAE. 273 to 275 is an ATP binding site; sequence RSE. Position 296 (Glu296) interacts with L-serine. ATP is bound at residue 360-363; the sequence is EISS. L-serine is bound at residue Ser396.

It belongs to the class-II aminoacyl-tRNA synthetase family. Type-1 seryl-tRNA synthetase subfamily. In terms of assembly, homodimer. The tRNA molecule binds across the dimer.

The protein localises to the cytoplasm. It catalyses the reaction tRNA(Ser) + L-serine + ATP = L-seryl-tRNA(Ser) + AMP + diphosphate + H(+). It carries out the reaction tRNA(Sec) + L-serine + ATP = L-seryl-tRNA(Sec) + AMP + diphosphate + H(+). It participates in aminoacyl-tRNA biosynthesis; selenocysteinyl-tRNA(Sec) biosynthesis; L-seryl-tRNA(Sec) from L-serine and tRNA(Sec): step 1/1. Functionally, catalyzes the attachment of serine to tRNA(Ser). Is also able to aminoacylate tRNA(Sec) with serine, to form the misacylated tRNA L-seryl-tRNA(Sec), which will be further converted into selenocysteinyl-tRNA(Sec). The protein is Serine--tRNA ligase of Aliivibrio fischeri (strain MJ11) (Vibrio fischeri).